A 346-amino-acid polypeptide reads, in one-letter code: Elongation factor Ts (346 aa).

The involved in Mg(2+) ion dislocation from EF-Tu stretch occupies residues 80-83; that stretch reads TDFV.

It belongs to the EF-Ts family.

The protein resides in the cytoplasm. Associates with the EF-Tu.GDP complex and induces the exchange of GDP to GTP. It remains bound to the aminoacyl-tRNA.EF-Tu.GTP complex up to the GTP hydrolysis stage on the ribosome. This Streptococcus suis (strain 98HAH33) protein is Elongation factor Ts.